Consider the following 766-residue polypeptide: MSQEEVPGEIPGDIAIEKAENTVQDDVEAKNTSETKKTIPPMLNVEKVDVAAVGEKSPAPVSVYDLFKKYQKPDVKSDSEDMNIGFDQLTTDEKNGFLRKLQMLTVGNKKTLKVPGESTPSPASRLLKKFVPSRRPSTENKSCESPSRFSLFGKSNKKAPELERPMNGGQPRKKSARRLNFGKEIEERTETDFQNNRVVAAMTREYEKIVTLKGVPVPINKPPRQQGPRGSLETPTDSPAKTETSSISKSYGSDYQSSRDRYTSINEDSLTKKRISTPNRGQGLSNRDNATWHGELPPRDYTSPTFSRKIFVGGVPWDITEAALKDSFGEFGSCAVEWPGHEARYRNAQSNTASLNLRNQSKYTGQAATGYVYMIFEDERAVASLLHECSQEIGGAGEWYFKIRAQRSKSTEIRQVQIIPWVTSDSMFCEDESLLEVGIEPKRTVFVGALHGMMTAQVLHSIMEDCFGSVECVQLDTDKFKYPIGSGRVTFREHGAYFKAIEMGYLHVHTSKFRKRVQIDPFLESTNCMVCTTELAHCFCRNRNCFKYYCHTCWAVDHGHGHDGEVHVPVIVPSSASKAFSGPNRRSHLSSNSPSKPASLMSSSNSQVAHMVSPAYPVLVGAPAQNLSALYGYIQNSQQMMITPAAVYEPPMTPSPNEMKRRSFPEFQPQPTVFFNSTPMMTPQKGVPCSDGSAVPAYYANSAAFLTPPSSYYNSPSHSTSSNLSPQQPQQYYGANLYYGYMPQMSYDGGPNQSAMHLPHTPNYQQ.

Disordered stretches follow at residues 1–35 (MSQE…TSET), 131–179 (VPSR…ARRL), and 216–299 (PVPI…LPPR). Composition is skewed to polar residues over residues 233-256 (ETPT…SDYQ) and 276-289 (STPN…NRDN). In terms of domain architecture, RRM spans 310 to 332 (IFVGGVPWDITEAALKDSFGEFG). The segment at 578-602 (KAFSGPNRRSHLSSNSPSKPASLMS) is disordered. The segment covering 589 to 602 (LSSNSPSKPASLMS) has biased composition (low complexity).

In terms of biological role, cytoplasmic polyadenylation element binding protein that binds to and regulates the translation of specific mRNAs. In Caenorhabditis remanei (Caenorhabditis vulgaris), this protein is Cytoplasmic polyadenylation element-binding protein 3 (cpb-3).